Here is a 636-residue protein sequence, read N- to C-terminus: tRNA uridine 5-carboxymethylaminomethyl modification enzyme MnmG (636 aa).

18-23 (GAGHAG) contacts FAD. 281 to 295 (GPRYCPSIEDKIVRF) contacts NAD(+).

The protein belongs to the MnmG family. Homodimer. Heterotetramer of two MnmE and two MnmG subunits. FAD is required as a cofactor.

The protein localises to the cytoplasm. In terms of biological role, NAD-binding protein involved in the addition of a carboxymethylaminomethyl (cmnm) group at the wobble position (U34) of certain tRNAs, forming tRNA-cmnm(5)s(2)U34. The protein is tRNA uridine 5-carboxymethylaminomethyl modification enzyme MnmG of Lactiplantibacillus plantarum (strain ATCC BAA-793 / NCIMB 8826 / WCFS1) (Lactobacillus plantarum).